The following is a 495-amino-acid chain: ATP synthase subunit alpha, chloroplastic (495 aa).

Residue 170-177 (GDRQTGKT) participates in ATP binding.

The protein belongs to the ATPase alpha/beta chains family. As to quaternary structure, F-type ATPases have 2 components, CF(1) - the catalytic core - and CF(0) - the membrane proton channel. CF(1) has five subunits: alpha(3), beta(3), gamma(1), delta(1), epsilon(1). CF(0) has four main subunits: a, b, b' and c.

Its subcellular location is the plastid. It is found in the chloroplast thylakoid membrane. The enzyme catalyses ATP + H2O + 4 H(+)(in) = ADP + phosphate + 5 H(+)(out). In terms of biological role, produces ATP from ADP in the presence of a proton gradient across the membrane. The alpha chain is a regulatory subunit. The chain is ATP synthase subunit alpha, chloroplastic from Cyanidioschyzon merolae (strain NIES-3377 / 10D) (Unicellular red alga).